We begin with the raw amino-acid sequence, 88 residues long: Acylphosphatase (88 aa).

An Acylphosphatase-like domain is found at 3–88 (AARFVVSGVV…VPPTEDFVTG (86 aa)). Residues R18 and N36 contribute to the active site.

This sequence belongs to the acylphosphatase family.

The catalysed reaction is an acyl phosphate + H2O = a carboxylate + phosphate + H(+). The sequence is that of Acylphosphatase (acyP) from Xanthomonas oryzae pv. oryzae (strain MAFF 311018).